Reading from the N-terminus, the 362-residue chain is 3-isopropylmalate dehydrogenase (362 aa).

78-91 (GPKWESLPPDEQPE) is an NAD(+) binding site. The substrate site is built by R99, R109, R138, and D227. Residues D227, D251, and D255 each contribute to the Mg(2+) site. Residue 285–297 (GSAPDIAGQGIAN) coordinates NAD(+).

The protein belongs to the isocitrate and isopropylmalate dehydrogenases family. LeuB type 1 subfamily. Homodimer. It depends on Mg(2+) as a cofactor. The cofactor is Mn(2+).

The protein resides in the cytoplasm. The catalysed reaction is (2R,3S)-3-isopropylmalate + NAD(+) = 4-methyl-2-oxopentanoate + CO2 + NADH. It functions in the pathway amino-acid biosynthesis; L-leucine biosynthesis; L-leucine from 3-methyl-2-oxobutanoate: step 3/4. In terms of biological role, catalyzes the oxidation of 3-carboxy-2-hydroxy-4-methylpentanoate (3-isopropylmalate) to 3-carboxy-4-methyl-2-oxopentanoate. The product decarboxylates to 4-methyl-2 oxopentanoate. The polypeptide is 3-isopropylmalate dehydrogenase (Geobacter sulfurreducens (strain ATCC 51573 / DSM 12127 / PCA)).